The chain runs to 503 residues: Ferulic acid decarboxylase 1 (503 aa).

Mn(2+) contacts are provided by Asn-170, His-193, and Glu-236. Prenylated FMN contacts are provided by residues 170-175 (NWSIAR), 192-193 (QH), and Glu-236. Residue Glu-285 is the Proton donor of the active site. Position 394 (Lys-394) interacts with prenylated FMN.

The protein belongs to the UbiD family. UbiD-like/FDC subfamily. In terms of assembly, homodimer. May form higher order oligomers. The cofactor is Mn(2+). It depends on prenylated FMN as a cofactor.

The protein localises to the cytoplasm. The catalysed reaction is (E)-4-coumarate + H(+) = 4-vinylphenol + CO2. It carries out the reaction (E)-cinnamate + H(+) = styrene + CO2. The enzyme catalyses (E)-ferulate + H(+) = 2-methoxy-4-vinylphenol + CO2. In terms of biological role, catalyzes the reversible decarboxylation of aromatic carboxylic acids like ferulic acid, p-coumaric acid or cinnamic acid, producing the corresponding vinyl derivatives 4-vinylphenol, 4-vinylguaiacol, and styrene, respectively, which play the role of aroma metabolites. Not essential for ubiquinone synthesis. The polypeptide is Ferulic acid decarboxylase 1 (Saccharomyces cerevisiae (strain ATCC 204508 / S288c) (Baker's yeast)).